We begin with the raw amino-acid sequence, 89 residues long: Elongation factor 1-beta (89 aa).

This sequence belongs to the EF-1-beta/EF-1-delta family.

Promotes the exchange of GDP for GTP in EF-1-alpha/GDP, thus allowing the regeneration of EF-1-alpha/GTP that could then be used to form the ternary complex EF-1-alpha/GTP/AAtRNA. This chain is Elongation factor 1-beta, found in Methanobrevibacter smithii (strain ATCC 35061 / DSM 861 / OCM 144 / PS).